Consider the following 186-residue polypeptide: Ribosome maturation factor RimP (186 aa).

Belongs to the RimP family.

The protein localises to the cytoplasm. Functionally, required for maturation of 30S ribosomal subunits. This Rhizorhabdus wittichii (strain DSM 6014 / CCUG 31198 / JCM 15750 / NBRC 105917 / EY 4224 / RW1) (Sphingomonas wittichii) protein is Ribosome maturation factor RimP.